The following is a 289-amino-acid chain: Lipoyl synthase (289 aa).

7 residues coordinate [4Fe-4S] cluster: C33, C38, C44, C59, C63, C66, and S274. Residues F45–L263 form the Radical SAM core domain.

The protein belongs to the radical SAM superfamily. Lipoyl synthase family. [4Fe-4S] cluster serves as cofactor.

The protein localises to the cytoplasm. The enzyme catalyses [[Fe-S] cluster scaffold protein carrying a second [4Fe-4S](2+) cluster] + N(6)-octanoyl-L-lysyl-[protein] + 2 oxidized [2Fe-2S]-[ferredoxin] + 2 S-adenosyl-L-methionine + 4 H(+) = [[Fe-S] cluster scaffold protein] + N(6)-[(R)-dihydrolipoyl]-L-lysyl-[protein] + 4 Fe(3+) + 2 hydrogen sulfide + 2 5'-deoxyadenosine + 2 L-methionine + 2 reduced [2Fe-2S]-[ferredoxin]. Its pathway is protein modification; protein lipoylation via endogenous pathway; protein N(6)-(lipoyl)lysine from octanoyl-[acyl-carrier-protein]: step 2/2. Its function is as follows. Catalyzes the radical-mediated insertion of two sulfur atoms into the C-6 and C-8 positions of the octanoyl moiety bound to the lipoyl domains of lipoate-dependent enzymes, thereby converting the octanoylated domains into lipoylated derivatives. This chain is Lipoyl synthase, found in Synechococcus sp. (strain RCC307).